A 205-amino-acid chain; its full sequence is Thiamine-phosphate synthase (205 aa).

Residues 35-39 (QYRDK) and N67 contribute to the 4-amino-2-methyl-5-(diphosphooxymethyl)pyrimidine site. The Mg(2+) site is built by D68 and D86. T105 is a binding site for 4-amino-2-methyl-5-(diphosphooxymethyl)pyrimidine. A 2-[(2R,5Z)-2-carboxy-4-methylthiazol-5(2H)-ylidene]ethyl phosphate-binding site is contributed by 132-134 (SLT). Position 135 (K135) interacts with 4-amino-2-methyl-5-(diphosphooxymethyl)pyrimidine. G162 lines the 2-[(2R,5Z)-2-carboxy-4-methylthiazol-5(2H)-ylidene]ethyl phosphate pocket.

Belongs to the thiamine-phosphate synthase family. Requires Mg(2+) as cofactor.

It carries out the reaction 2-[(2R,5Z)-2-carboxy-4-methylthiazol-5(2H)-ylidene]ethyl phosphate + 4-amino-2-methyl-5-(diphosphooxymethyl)pyrimidine + 2 H(+) = thiamine phosphate + CO2 + diphosphate. The enzyme catalyses 2-(2-carboxy-4-methylthiazol-5-yl)ethyl phosphate + 4-amino-2-methyl-5-(diphosphooxymethyl)pyrimidine + 2 H(+) = thiamine phosphate + CO2 + diphosphate. The catalysed reaction is 4-methyl-5-(2-phosphooxyethyl)-thiazole + 4-amino-2-methyl-5-(diphosphooxymethyl)pyrimidine + H(+) = thiamine phosphate + diphosphate. It functions in the pathway cofactor biosynthesis; thiamine diphosphate biosynthesis; thiamine phosphate from 4-amino-2-methyl-5-diphosphomethylpyrimidine and 4-methyl-5-(2-phosphoethyl)-thiazole: step 1/1. Its function is as follows. Condenses 4-methyl-5-(beta-hydroxyethyl)thiazole monophosphate (THZ-P) and 2-methyl-4-amino-5-hydroxymethyl pyrimidine pyrophosphate (HMP-PP) to form thiamine monophosphate (TMP). In Pseudomonas savastanoi pv. phaseolicola (strain 1448A / Race 6) (Pseudomonas syringae pv. phaseolicola (strain 1448A / Race 6)), this protein is Thiamine-phosphate synthase.